Consider the following 69-residue polypeptide: Cold shock-like protein CspC (69 aa).

Residues 6 to 66 (GQVKWFNESK…GQKGPAAVNV (61 aa)) form the CSD domain.

It localises to the cytoplasm. The chain is Cold shock-like protein CspC (cspC) from Buchnera aphidicola subsp. Acyrthosiphon pisum (strain APS) (Acyrthosiphon pisum symbiotic bacterium).